Reading from the N-terminus, the 320-residue chain is Phospho-N-acetylmuramoyl-pentapeptide-transferase (320 aa).

Transmembrane regions (helical) follow at residues 5–25 (FWAFTRAFIVTVIFMPAVIKF), 51–71 (MGGALFIAAASLSALIGSVAY), 75–95 (IGFVMVLIPILAVVAYAIIGG), 121–141 (LCAVVIMIIMWIMQIPLILNI), 143–163 (FIGVFNLGIFYFIFLWFWLVG), 176–196 (GLLTGTSLIVYLVYTWIALGV), 198–218 (NHIIVIFNASIIGALVGFLLF), 241–261 (IESIVLGIPFSLLWFGLIFVI), and 300–320 (IDALFWIVTAIIGIIGILYMS).

The protein belongs to the glycosyltransferase 4 family. MraY subfamily. Requires Mg(2+) as cofactor.

Its subcellular location is the cell membrane. The enzyme catalyses UDP-N-acetyl-alpha-D-muramoyl-L-alanyl-gamma-D-glutamyl-L-lysyl-D-alanyl-D-alanine + di-trans,octa-cis-undecaprenyl phosphate = Mur2Ac(oyl-L-Ala-gamma-D-Glu-L-Lys-D-Ala-D-Ala)-di-trans,octa-cis-undecaprenyl diphosphate + UMP. The protein operates within cell wall biogenesis; peptidoglycan biosynthesis. Catalyzes the initial step of the lipid cycle reactions in the biosynthesis of the cell wall peptidoglycan: transfers peptidoglycan precursor phospho-MurNAc-pentapeptide from UDP-MurNAc-pentapeptide onto the lipid carrier undecaprenyl phosphate, yielding undecaprenyl-pyrophosphoryl-MurNAc-pentapeptide, known as lipid I. This Leuconostoc mesenteroides subsp. mesenteroides (strain ATCC 8293 / DSM 20343 / BCRC 11652 / CCM 1803 / JCM 6124 / NCDO 523 / NBRC 100496 / NCIMB 8023 / NCTC 12954 / NRRL B-1118 / 37Y) protein is Phospho-N-acetylmuramoyl-pentapeptide-transferase.